We begin with the raw amino-acid sequence, 230 residues long: Phosphoglycolate phosphatase (230 aa).

Asp9 functions as the Nucleophile in the catalytic mechanism. Mg(2+) contacts are provided by Asp9, Asp11, and Asp175.

The protein belongs to the HAD-like hydrolase superfamily. CbbY/CbbZ/Gph/YieH family. The cofactor is Mg(2+).

The enzyme catalyses 2-phosphoglycolate + H2O = glycolate + phosphate. It participates in organic acid metabolism; glycolate biosynthesis; glycolate from 2-phosphoglycolate: step 1/1. Specifically catalyzes the dephosphorylation of 2-phosphoglycolate. Is involved in the dissimilation of the intracellular 2-phosphoglycolate formed during the DNA repair of 3'-phosphoglycolate ends, a major class of DNA lesions induced by oxidative stress. This is Phosphoglycolate phosphatase from Psychrobacter arcticus (strain DSM 17307 / VKM B-2377 / 273-4).